The following is a 401-amino-acid chain: Nicotinate phosphoribosyltransferase (401 aa).

Histidine 221 is subject to Phosphohistidine; by autocatalysis.

Belongs to the NAPRTase family. Post-translationally, transiently phosphorylated on a His residue during the reaction cycle. Phosphorylation strongly increases the affinity for substrates and increases the rate of nicotinate D-ribonucleotide production. Dephosphorylation regenerates the low-affinity form of the enzyme, leading to product release.

It catalyses the reaction nicotinate + 5-phospho-alpha-D-ribose 1-diphosphate + ATP + H2O = nicotinate beta-D-ribonucleotide + ADP + phosphate + diphosphate. It participates in cofactor biosynthesis; NAD(+) biosynthesis; nicotinate D-ribonucleotide from nicotinate: step 1/1. Functionally, catalyzes the synthesis of beta-nicotinate D-ribonucleotide from nicotinate and 5-phospho-D-ribose 1-phosphate at the expense of ATP. The polypeptide is Nicotinate phosphoribosyltransferase (Erwinia tasmaniensis (strain DSM 17950 / CFBP 7177 / CIP 109463 / NCPPB 4357 / Et1/99)).